Consider the following 212-residue polypeptide: Dephospho-CoA kinase (212 aa).

The DPCK domain occupies 3-204; sequence ILGLTGSIGM…GSRPAAPVGG (202 aa). Position 11–16 (11–16) interacts with ATP; it reads GMGKST.

It belongs to the CoaE family.

It localises to the cytoplasm. It carries out the reaction 3'-dephospho-CoA + ATP = ADP + CoA + H(+). It functions in the pathway cofactor biosynthesis; coenzyme A biosynthesis; CoA from (R)-pantothenate: step 5/5. Catalyzes the phosphorylation of the 3'-hydroxyl group of dephosphocoenzyme A to form coenzyme A. The sequence is that of Dephospho-CoA kinase from Paramagnetospirillum magneticum (strain ATCC 700264 / AMB-1) (Magnetospirillum magneticum).